An 80-amino-acid polypeptide reads, in one-letter code: MKNIEERIKKIIFEKLDIKQEKIFNDASFIDDLGADSLDTVELIMALEEEFDIEISDEEAEKINTVQKSIDFIQKKNLKK.

Positions 2 to 77 (KNIEERIKKI…KSIDFIQKKN (76 aa)) constitute a Carrier domain. O-(pantetheine 4'-phosphoryl)serine is present on Ser37.

The protein belongs to the acyl carrier protein (ACP) family. In terms of processing, 4'-phosphopantetheine is transferred from CoA to a specific serine of apo-ACP by AcpS. This modification is essential for activity because fatty acids are bound in thioester linkage to the sulfhydryl of the prosthetic group.

The protein localises to the cytoplasm. It participates in lipid metabolism; fatty acid biosynthesis. In terms of biological role, carrier of the growing fatty acid chain in fatty acid biosynthesis. This chain is Acyl carrier protein, found in Buchnera aphidicola subsp. Acyrthosiphon pisum (strain APS) (Acyrthosiphon pisum symbiotic bacterium).